Reading from the N-terminus, the 50-residue chain is Insulin 2 (50 aa).

3 disulfides stabilise this stretch: Cys-8–Cys-36, Cys-20–Cys-49, and Cys-35–Cys-40.

It belongs to the insulin family. As to quaternary structure, heterodimer of a B chain and an A chain linked by two disulfide bonds.

The protein localises to the secreted. Insulin decreases blood glucose concentration. It increases cell permeability to monosaccharides, amino acids and fatty acids. It accelerates glycolysis, the pentose phosphate cycle, and glycogen synthesis in liver. This Batrachoididae sp. (Toadfish) protein is Insulin 2 (ins2).